The sequence spans 204 residues: MNYDSILDNISNIIKIDENKKEKLIQYASLVIDYNKNVNITGAKTEEDFFNDHIADCLLALDIFYDYDNIIDIGSGSGLPSIPLAIIFNDKKFTLCESKNKKAEFLRLAKDKLGLDNIEVKCINAYEIKEKYDTITSRAFSDISTLLKIFNKLKTKKSKLILYKGKIEKIEEELKEANIQKNKYNIEIKKLESKDKERHIVIIS.

S-adenosyl-L-methionine is bound by residues G74, L79, 125–126 (AY), and R138.

This sequence belongs to the methyltransferase superfamily. RNA methyltransferase RsmG family.

The protein resides in the cytoplasm. Functionally, specifically methylates the N7 position of a guanine in 16S rRNA. The polypeptide is Ribosomal RNA small subunit methyltransferase G (Brachyspira hyodysenteriae (strain ATCC 49526 / WA1)).